The chain runs to 379 residues: Protein COS4 (379 aa).

Helical transmembrane passes span 43 to 63 (IYKS…SVWW), 70 to 90 (IYPL…VLVI), 233 to 253 (ISNI…YVSR), and 255 to 275 (MCLL…VQGF).

Belongs to the DUP/COS family.

The protein resides in the membrane. This chain is Protein COS4 (COS4), found in Saccharomyces cerevisiae (strain ATCC 204508 / S288c) (Baker's yeast).